The chain runs to 1000 residues: Vacuolar protein-sorting protein bro1 (1000 aa).

A BRO1 domain is found at 5–406 (PMISCPLKQT…EKVETADGEM (402 aa)). Residues 732-793 (YAEMTETVDS…RQLMERLSTE (62 aa)) adopt a coiled-coil conformation. Disordered stretches follow at residues 760–857 (LLGQ…PYSQ) and 891–1000 (PIPA…NAWK). The span at 764-792 (IEREKAAGTSDHEEREREKLRQLMERLST) shows a compositional bias: basic and acidic residues. Residues 840–849 (VPQQHGTPVS) are compositionally biased toward polar residues. Pro residues-rich tracts occupy residues 898-922 (SPPP…PPVP) and 931-954 (YVPP…PFPS). A compositionally biased stretch (polar residues) spans 981–991 (TGPSVSANSSD).

This sequence belongs to the BRO1 family.

Its subcellular location is the cytoplasm. The protein localises to the endosome. Its function is as follows. Involved in concentration and sorting of cargo proteins of the multivesicular body (MVB) for incorporation into intralumenal vesicles. In Emericella nidulans (strain FGSC A4 / ATCC 38163 / CBS 112.46 / NRRL 194 / M139) (Aspergillus nidulans), this protein is Vacuolar protein-sorting protein bro1 (broA).